The primary structure comprises 335 residues: Dihydroorotate dehydrogenase (quinone) (335 aa).

FMN is bound by residues 59–63 and Thr-83; that span reads AGLDK. Lys-63 provides a ligand contact to substrate. 108–112 is a substrate binding site; sequence NRMGF. Positions 136 and 169 each coordinate FMN. Asn-169 is a binding site for substrate. Ser-172 acts as the Nucleophile in catalysis. Substrate is bound at residue Asn-174. Residues Lys-214 and Thr-242 each coordinate FMN. 243-244 is a binding site for substrate; the sequence is NT. FMN-binding positions include Gly-265, Gly-294, and 315-316; that span reads YS.

The protein belongs to the dihydroorotate dehydrogenase family. Type 2 subfamily. Monomer. FMN is required as a cofactor.

The protein resides in the cell membrane. It catalyses the reaction (S)-dihydroorotate + a quinone = orotate + a quinol. The protein operates within pyrimidine metabolism; UMP biosynthesis via de novo pathway; orotate from (S)-dihydroorotate (quinone route): step 1/1. Functionally, catalyzes the conversion of dihydroorotate to orotate with quinone as electron acceptor. The polypeptide is Dihydroorotate dehydrogenase (quinone) (Neisseria meningitidis serogroup C / serotype 2a (strain ATCC 700532 / DSM 15464 / FAM18)).